Reading from the N-terminus, the 350-residue chain is tRNA N6-adenosine threonylcarbamoyltransferase (350 aa).

The Fe cation site is built by histidine 109 and histidine 113. Residues threonine 136–glycine 140, aspartate 169, glycine 182, aspartate 186, and asparagine 284 contribute to the substrate site. Aspartate 312 contacts Fe cation.

Belongs to the KAE1 / TsaD family. Fe(2+) serves as cofactor.

The protein localises to the cytoplasm. It carries out the reaction L-threonylcarbamoyladenylate + adenosine(37) in tRNA = N(6)-L-threonylcarbamoyladenosine(37) in tRNA + AMP + H(+). Required for the formation of a threonylcarbamoyl group on adenosine at position 37 (t(6)A37) in tRNAs that read codons beginning with adenine. Is involved in the transfer of the threonylcarbamoyl moiety of threonylcarbamoyl-AMP (TC-AMP) to the N6 group of A37, together with TsaE and TsaB. TsaD likely plays a direct catalytic role in this reaction. This chain is tRNA N6-adenosine threonylcarbamoyltransferase, found in Pelodictyon phaeoclathratiforme (strain DSM 5477 / BU-1).